Reading from the N-terminus, the 88-residue chain is Small ribosomal subunit protein uS19 (88 aa).

It belongs to the universal ribosomal protein uS19 family.

In terms of biological role, protein S19 forms a complex with S13 that binds strongly to the 16S ribosomal RNA. The chain is Small ribosomal subunit protein uS19 (rpsS) from Mycoplasma capricolum subsp. capricolum (strain California kid / ATCC 27343 / NCTC 10154).